A 383-amino-acid chain; its full sequence is Lipoyl synthase, mitochondrial (383 aa).

The span at 25–34 (STPSLLQTLD) shows a compositional bias: polar residues. The tract at residues 25 to 44 (STPSLLQTLDPSVPSPPAAG) is disordered. Positions 110, 115, 121, 141, 145, 148, and 357 each coordinate [4Fe-4S] cluster. The region spanning 126-346 (ETGTATATIM…RALGVEMGFR (221 aa)) is the Radical SAM core domain.

Belongs to the radical SAM superfamily. Lipoyl synthase family. Requires [4Fe-4S] cluster as cofactor.

The protein localises to the mitochondrion. It carries out the reaction [[Fe-S] cluster scaffold protein carrying a second [4Fe-4S](2+) cluster] + N(6)-octanoyl-L-lysyl-[protein] + 2 oxidized [2Fe-2S]-[ferredoxin] + 2 S-adenosyl-L-methionine + 4 H(+) = [[Fe-S] cluster scaffold protein] + N(6)-[(R)-dihydrolipoyl]-L-lysyl-[protein] + 4 Fe(3+) + 2 hydrogen sulfide + 2 5'-deoxyadenosine + 2 L-methionine + 2 reduced [2Fe-2S]-[ferredoxin]. It participates in protein modification; protein lipoylation via endogenous pathway; protein N(6)-(lipoyl)lysine from octanoyl-[acyl-carrier-protein]: step 2/2. In terms of biological role, catalyzes the radical-mediated insertion of two sulfur atoms into the C-6 and C-8 positions of the octanoyl moiety bound to the lipoyl domains of lipoate-dependent enzymes, thereby converting the octanoylated domains into lipoylated derivatives. This Zea mays (Maize) protein is Lipoyl synthase, mitochondrial.